The primary structure comprises 330 residues: GMP reductase (330 aa).

Catalysis depends on Cys180, which acts as the Thioimidate intermediate. NADP(+) is bound at residue 209-232 (LIADGGIRHNGDIAKSVRFGASMV).

It belongs to the IMPDH/GMPR family. GuaC type 2 subfamily.

It carries out the reaction IMP + NH4(+) + NADP(+) = GMP + NADPH + 2 H(+). Functionally, catalyzes the irreversible NADPH-dependent deamination of GMP to IMP. It functions in the conversion of nucleobase, nucleoside and nucleotide derivatives of G to A nucleotides, and in maintaining the intracellular balance of A and G nucleotides. This Lactobacillus delbrueckii subsp. bulgaricus (strain ATCC 11842 / DSM 20081 / BCRC 10696 / JCM 1002 / NBRC 13953 / NCIMB 11778 / NCTC 12712 / WDCM 00102 / Lb 14) protein is GMP reductase.